The primary structure comprises 413 residues: Imidazolonepropionase (413 aa).

Positions 77 and 79 each coordinate Fe(3+). Zn(2+) is bound by residues His-77 and His-79. 4-imidazolone-5-propanoate contacts are provided by Arg-86, Tyr-149, and His-182. Tyr-149 is an N-formimidoyl-L-glutamate binding site. Position 247 (His-247) interacts with Fe(3+). Position 247 (His-247) interacts with Zn(2+). Gln-250 lines the 4-imidazolone-5-propanoate pocket. Residue Asp-322 participates in Fe(3+) binding. Asp-322 serves as a coordination point for Zn(2+). N-formimidoyl-L-glutamate is bound by residues Asn-324 and Gly-326. A 4-imidazolone-5-propanoate-binding site is contributed by Thr-327.

The protein belongs to the metallo-dependent hydrolases superfamily. HutI family. The cofactor is Zn(2+). It depends on Fe(3+) as a cofactor.

It localises to the cytoplasm. The catalysed reaction is 4-imidazolone-5-propanoate + H2O = N-formimidoyl-L-glutamate. It functions in the pathway amino-acid degradation; L-histidine degradation into L-glutamate; N-formimidoyl-L-glutamate from L-histidine: step 3/3. Its function is as follows. Catalyzes the hydrolytic cleavage of the carbon-nitrogen bond in imidazolone-5-propanoate to yield N-formimidoyl-L-glutamate. It is the third step in the universal histidine degradation pathway. This is Imidazolonepropionase from Chromobacterium violaceum (strain ATCC 12472 / DSM 30191 / JCM 1249 / CCUG 213 / NBRC 12614 / NCIMB 9131 / NCTC 9757 / MK).